Consider the following 231-residue polypeptide: Two-component response regulator ORR1 (231 aa).

Positions 9–135 constitute a Response regulatory domain; sequence RVLLVDDSPV…DVQRLRNCSP (127 aa). Asp68 is modified (4-aspartylphosphate).

It belongs to the ARR family. Type-A subfamily. In terms of processing, two-component system major event consists of a His-to-Asp phosphorelay between a sensor histidine kinase (HK) and a response regulator (RR). In plants, the His-to-Asp phosphorelay involves an additional intermediate named Histidine-containing phosphotransfer protein (HPt). This multistep phosphorelay consists of a His-Asp-His-Asp sequential transfer of a phosphate group between first a His and an Asp of the HK protein, followed by the transfer to a conserved His of the HPt protein and finally the transfer to an Asp in the receiver domain of the RR protein. In terms of tissue distribution, expressed in roots, leaf blades, leaf sheaths, shoot apex, flowers and panicles.

Functions as a response regulator involved in His-to-Asp phosphorelay signal transduction system. Phosphorylation of the Asp residue in the receiver domain activates the ability of the protein to promote the transcription of target genes. Type-A response regulators seem to act as negative regulators of the cytokinin signaling. Involved in adventitious (crown) root initiation under the regulation of CRL5. This chain is Two-component response regulator ORR1, found in Oryza sativa subsp. japonica (Rice).